Here is a 211-residue protein sequence, read N- to C-terminus: Uracil phosphoribosyltransferase (211 aa).

5-phospho-alpha-D-ribose 1-diphosphate is bound by residues Arg-78, Arg-103, and 130–138; that span reads DPMLATGGS. Residues Ile-193 and 198 to 200 contribute to the uracil site; that span reads GDA. Asp-199 lines the 5-phospho-alpha-D-ribose 1-diphosphate pocket.

The protein belongs to the UPRTase family. The cofactor is Mg(2+).

The catalysed reaction is UMP + diphosphate = 5-phospho-alpha-D-ribose 1-diphosphate + uracil. Its pathway is pyrimidine metabolism; UMP biosynthesis via salvage pathway; UMP from uracil: step 1/1. With respect to regulation, allosterically activated by GTP. Functionally, catalyzes the conversion of uracil and 5-phospho-alpha-D-ribose 1-diphosphate (PRPP) to UMP and diphosphate. This chain is Uracil phosphoribosyltransferase, found in Hahella chejuensis (strain KCTC 2396).